Here is a 191-residue protein sequence, read N- to C-terminus: RNA polymerase sigma factor CnrH (191 aa).

Positions 49 to 62 (DVVQDTFVAAWHAL) match the Polymerase core binding motif. The segment at residues 156–175 (QPEAAAVLGLSVKAVEGRIG) is a DNA-binding region (H-T-H motif).

Belongs to the sigma-70 factor family. ECF subfamily.

Its function is as follows. Sigma factors are initiation factors that promote the attachment of RNA polymerase to specific initiation sites and are then released. This sigma factor regulates the genes for a membrane-located efflux system that confers resistance to nickel and cobalt. Functionally, cnrH alone is able to activate CNR expression, while both CnrY and CrnX are needed for nickel induction of cnrH. Binds DNA in an RNA polymerase-dependent fashion. CnrH may be controlled by a CnrYX transmembrane anti-sigma factor complex which binds CnrH in the absence of Ni(2+). If Ni(2+) appears in the periplasm, it may be bound by CnrR (CnrX); the signal then would be transmitted by CnrY into the cytoplasm and CnrH would be released. This Cupriavidus metallidurans (strain ATCC 43123 / DSM 2839 / NBRC 102507 / CH34) (Ralstonia metallidurans) protein is RNA polymerase sigma factor CnrH (cnrH).